Consider the following 696-residue polypeptide: Putative zinc metalloproteinase YIL108W (696 aa).

Lys245 participates in a covalent cross-link: Glycyl lysine isopeptide (Lys-Gly) (interchain with G-Cter in ubiquitin). His318 lines the Zn(2+) pocket. Glu319 is a catalytic residue. Zn(2+) contacts are provided by His322 and His328. Position 361 is a phosphoserine (Ser361). Residues Lys478, Lys518, Lys579, Lys590, and Lys596 each participate in a glycyl lysine isopeptide (Lys-Gly) (interchain with G-Cter in ubiquitin) cross-link. The region spanning 522–695 is the Jacalin-type lectin domain; that stretch reads GIKSPLYGRS…VDAFGIIYGA (174 aa).

This sequence belongs to the peptidase M10B family. Zn(2+) is required as a cofactor.

The protein resides in the cytoplasm. This Saccharomyces cerevisiae (strain ATCC 204508 / S288c) (Baker's yeast) protein is Putative zinc metalloproteinase YIL108W.